Reading from the N-terminus, the 47-residue chain is PhoP/PhoQ regulator MgrB (47 aa).

The helical transmembrane segment at 6-26 (WAILLAVLVACLLLWMQTLNV) threads the bilayer.

The protein belongs to the MgrB family. May form homooligomers. Probably interacts with the periplasmic domain of PhoQ.

It is found in the cell inner membrane. In terms of biological role, phoP-regulated transcription is redox-sensitive, being activated when the periplasm becomes more reducing. MgrB acts between DsbA/DsbB and PhoP/PhoQ in this pathway. Represses PhoP/PhoQ signaling, possibly by binding to the periplasmic domain of PhoQ, altering its activity and that of downstream effector PhoP. This chain is PhoP/PhoQ regulator MgrB, found in Cronobacter sakazakii (strain ATCC BAA-894) (Enterobacter sakazakii).